The sequence spans 266 residues: DNA-directed RNA polymerase subunit Rpo3 (266 aa).

Residues Cys205, Cys208, and Cys211 each contribute to the [3Fe-4S] cluster site.

Belongs to the archaeal Rpo3/eukaryotic RPB3 RNA polymerase subunit family. As to quaternary structure, part of the RNA polymerase complex. [3Fe-4S] cluster serves as cofactor.

Its subcellular location is the cytoplasm. It catalyses the reaction RNA(n) + a ribonucleoside 5'-triphosphate = RNA(n+1) + diphosphate. Its function is as follows. DNA-dependent RNA polymerase (RNAP) catalyzes the transcription of DNA into RNA using the four ribonucleoside triphosphates as substrates. This chain is DNA-directed RNA polymerase subunit Rpo3, found in Methanosarcina mazei (strain ATCC BAA-159 / DSM 3647 / Goe1 / Go1 / JCM 11833 / OCM 88) (Methanosarcina frisia).